The primary structure comprises 286 residues: 4-hydroxybenzoate octaprenyltransferase (286 aa).

7 helical membrane-spanning segments follow: residues 21–40 (GTLL…AGGM), 95–115 (ILFV…NGLV), 142–162 (FLGI…TGEV), 167–187 (WWLF…YAMV), 210–230 (QIIG…GWSA), 235–255 (LYGL…MLIF), and 266–286 (FLNN…DYLI).

Belongs to the UbiA prenyltransferase family. Requires Mg(2+) as cofactor.

It localises to the cell inner membrane. The enzyme catalyses all-trans-octaprenyl diphosphate + 4-hydroxybenzoate = 4-hydroxy-3-(all-trans-octaprenyl)benzoate + diphosphate. It participates in cofactor biosynthesis; ubiquinone biosynthesis. In terms of biological role, catalyzes the prenylation of para-hydroxybenzoate (PHB) with an all-trans polyprenyl group. Mediates the second step in the final reaction sequence of ubiquinone-8 (UQ-8) biosynthesis, which is the condensation of the polyisoprenoid side chain with PHB, generating the first membrane-bound Q intermediate 3-octaprenyl-4-hydroxybenzoate. The protein is 4-hydroxybenzoate octaprenyltransferase of Shewanella baltica (strain OS223).